The sequence spans 545 residues: Glucose-6-phosphate isomerase (545 aa).

Glu-351 functions as the Proton donor in the catalytic mechanism. Catalysis depends on residues His-382 and Lys-510.

This sequence belongs to the GPI family.

It is found in the cytoplasm. It carries out the reaction alpha-D-glucose 6-phosphate = beta-D-fructose 6-phosphate. Its pathway is carbohydrate biosynthesis; gluconeogenesis. The protein operates within carbohydrate degradation; glycolysis; D-glyceraldehyde 3-phosphate and glycerone phosphate from D-glucose: step 2/4. Functionally, catalyzes the reversible isomerization of glucose-6-phosphate to fructose-6-phosphate. The chain is Glucose-6-phosphate isomerase from Helicobacter pylori (strain J99 / ATCC 700824) (Campylobacter pylori J99).